A 103-amino-acid chain; its full sequence is Histone H4, minor (103 aa).

Gly residues predominate over residues Met1–Lys12. A disordered region spans residues Met1–Gly29. Lys5, Lys8, Lys12, and Lys16 each carry N6-acetyllysine. The segment covering Gly14–Asn23 has biased composition (basic residues). Residues Lys16–Lys21 mediate DNA binding.

The protein belongs to the histone H4 family. The nucleosome is a histone octamer containing two molecules each of H2A, H2B, H3 and H4 assembled in one H3-H4 heterotetramer and two H2A-H2B heterodimers. The octamer wraps approximately 147 bp of DNA.

The protein resides in the nucleus. It localises to the chromosome. Core component of nucleosome. Nucleosomes wrap and compact DNA into chromatin, limiting DNA accessibility to the cellular machineries which require DNA as a template. Histones thereby play a central role in transcription regulation, DNA repair, DNA replication and chromosomal stability. DNA accessibility is regulated via a complex set of post-translational modifications of histones, also called histone code, and nucleosome remodeling. The chain is Histone H4, minor from Tetrahymena pyriformis.